The chain runs to 214 residues: Osteoclast-stimulating factor 1 (214 aa).

Serine 2 carries the N-acetylserine modification. One can recognise an SH3 domain in the interval 12–71 (GQVKVFRALYTFEPRTPDELYFEEGDIIYITDMSDTSWWKGTCKGRTGLIPSNYVAEQAE). ANK repeat units follow at residues 72 to 101 (SIDN…GVNG), 105 to 135 (AGST…ELNQ), and 139 to 168 (LGDT…RTDL). Threonine 200 bears the Phosphothreonine mark. Phosphoserine occurs at positions 202 and 213.

As to quaternary structure, interacts with SRC and SMN1. Interacts with FASLG.

It is found in the cytoplasm. Its function is as follows. Induces bone resorption, acting probably through a signaling cascade which results in the secretion of factor(s) enhancing osteoclast formation and activity. The chain is Osteoclast-stimulating factor 1 (Ostf1) from Rattus norvegicus (Rat).